Reading from the N-terminus, the 326-residue chain is Flap endonuclease 1 (326 aa).

An N-domain region spans residues 1 to 98 (MGVQFNDSIP…KTREERRKVK (98 aa)). D27, D80, E152, E154, D173, D175, and D224 together coordinate Mg(2+). Residues 116–245 (DMQKYAKRIN…KKALTIIKNK (130 aa)) are I-domain. The interval 318 to 326 (SQTSLDSWF) is interaction with PCNA.

This sequence belongs to the XPG/RAD2 endonuclease family. FEN1 subfamily. Interacts with PCNA. PCNA stimulates the nuclease activity without altering cleavage specificity. The cofactor is Mg(2+).

Functionally, structure-specific nuclease with 5'-flap endonuclease and 5'-3' exonuclease activities involved in DNA replication and repair. During DNA replication, cleaves the 5'-overhanging flap structure that is generated by displacement synthesis when DNA polymerase encounters the 5'-end of a downstream Okazaki fragment. Binds the unpaired 3'-DNA end and kinks the DNA to facilitate 5' cleavage specificity. Cleaves one nucleotide into the double-stranded DNA from the junction in flap DNA, leaving a nick for ligation. Also involved in the base excision repair (BER) pathway. Acts as a genome stabilization factor that prevents flaps from equilibrating into structures that lead to duplications and deletions. Also possesses 5'-3' exonuclease activity on nicked or gapped double-stranded DNA. This Methanococcus aeolicus (strain ATCC BAA-1280 / DSM 17508 / OCM 812 / Nankai-3) protein is Flap endonuclease 1.